The sequence spans 419 residues: Light-independent protochlorophyllide reductase subunit N (419 aa).

[4Fe-4S] cluster-binding residues include cysteine 17, cysteine 42, and cysteine 103.

It belongs to the BchN/ChlN family. Protochlorophyllide reductase is composed of three subunits; ChlL, ChlN and ChlB. Forms a heterotetramer of two ChlB and two ChlN subunits. The cofactor is [4Fe-4S] cluster.

It catalyses the reaction chlorophyllide a + oxidized 2[4Fe-4S]-[ferredoxin] + 2 ADP + 2 phosphate = protochlorophyllide a + reduced 2[4Fe-4S]-[ferredoxin] + 2 ATP + 2 H2O. Its pathway is porphyrin-containing compound metabolism; chlorophyll biosynthesis (light-independent). Its function is as follows. Component of the dark-operative protochlorophyllide reductase (DPOR) that uses Mg-ATP and reduced ferredoxin to reduce ring D of protochlorophyllide (Pchlide) to form chlorophyllide a (Chlide). This reaction is light-independent. The NB-protein (ChlN-ChlB) is the catalytic component of the complex. The sequence is that of Light-independent protochlorophyllide reductase subunit N from Prochlorococcus marinus (strain NATL1A).